The sequence spans 231 residues: Lipoprotein-releasing system ATP-binding protein LolD (231 aa).

One can recognise an ABC transporter domain in the interval 6-231 (LKCQSVHKVY…VLAKVAPNSL (226 aa)). 42 to 49 (GASGSGKS) serves as a coordination point for ATP.

This sequence belongs to the ABC transporter superfamily. Lipoprotein translocase (TC 3.A.1.125) family. As to quaternary structure, the complex is composed of two ATP-binding proteins (LolD) and two transmembrane proteins (LolC and LolE).

It is found in the cell inner membrane. Its function is as follows. Part of the ABC transporter complex LolCDE involved in the translocation of mature outer membrane-directed lipoproteins, from the inner membrane to the periplasmic chaperone, LolA. Responsible for the formation of the LolA-lipoprotein complex in an ATP-dependent manner. The sequence is that of Lipoprotein-releasing system ATP-binding protein LolD from Hahella chejuensis (strain KCTC 2396).